We begin with the raw amino-acid sequence, 745 residues long: TonB-dependent heme receptor A (745 aa).

Positions 1–24 are cleaved as a signal peptide; sequence MNILINKRIFLLVTLVGIQLNVTA. The region spanning 45-157 is the TBDR plug domain; it reads DDSNKLPGRS…FAGTVKFETK (113 aa). Residues 168–745 form the TBDR beta-barrel domain; that stretch reads KIGGFLKYGN…NIKFSLSQKF (578 aa).

This sequence belongs to the TonB-dependent receptor family.

The protein resides in the cell outer membrane. Heme receptor. This chain is TonB-dependent heme receptor A (tdhA), found in Haemophilus influenzae (strain 86-028NP).